Consider the following 377-residue polypeptide: Nitric oxide reductase FlRd-NAD(+) reductase (377 aa).

The protein belongs to the FAD-dependent oxidoreductase family. Requires FAD as cofactor.

It is found in the cytoplasm. It catalyses the reaction 2 reduced [nitric oxide reductase rubredoxin domain] + NAD(+) + H(+) = 2 oxidized [nitric oxide reductase rubredoxin domain] + NADH. Its pathway is nitrogen metabolism; nitric oxide reduction. In terms of biological role, one of at least two accessory proteins for anaerobic nitric oxide (NO) reductase. Reduces the rubredoxin moiety of NO reductase. This is Nitric oxide reductase FlRd-NAD(+) reductase from Shigella sonnei (strain Ss046).